The sequence spans 1007 residues: Lysosomal alpha-mannosidase (1007 aa).

An N-terminal signal peptide occupies residues 1-47 (MGASVLPLGLGAGDCQSSSGRRMSACLPRTALSFLLSLLLATPGARA). 2 disulfide bridges follow: Cys-53-Cys-356 and Cys-266-Cys-271. Zn(2+)-binding residues include His-70 and Asp-72. A glycan (N-linked (GlcNAc...) asparagine) is linked at Asn-131. Asp-194 contributes to the Zn(2+) binding site. The active-site Nucleophile is the Asp-194. 3 N-linked (GlcNAc...) asparagine glycosylation sites follow: Asn-308, Asn-343, and Asn-365. Cystine bridges form between Cys-410–Cys-470 and Cys-491–Cys-499. His-444 contributes to the Zn(2+) binding site. N-linked (GlcNAc...) asparagine glycans are attached at residues Asn-495, Asn-540, Asn-639, Asn-686, Asn-760, and Asn-927.

Belongs to the glycosyl hydrolase 38 family. Requires Zn(2+) as cofactor.

The protein localises to the lysosome. It catalyses the reaction Hydrolysis of terminal, non-reducing alpha-D-mannose residues in alpha-D-mannosides.. In terms of biological role, necessary for the catabolism of N-linked carbohydrates released during glycoprotein turnover. The polypeptide is Lysosomal alpha-mannosidase (MAN2B1) (Cavia porcellus (Guinea pig)).